A 100-amino-acid chain; its full sequence is MGSRFLLALFLVLLVLGCEVQAAQQLQQDDPGSPALLDKVQESISSYWDTAKAAAQDLYQKTYLTSVDEKLRDMYSKSSAAMTTYASIFTDQILTLLKGE.

The N-terminal stretch at 1–22 is a signal peptide; it reads MGSRFLLALFLVLLVLGCEVQA. The interval 66–74 is lipid binding; sequence SVDEKLRDM. The interval 78 to 100 is lipoprotein lipase cofactor; the sequence is SSAAMTTYASIFTDQILTLLKGE.

The protein belongs to the apolipoprotein C2 family. In terms of processing, proapolipoprotein C-II is synthesized as a sialic acid containing glycoprotein which is subsequently desialylated prior to its proteolytic processing. Proapolipoprotein C-II, the major form found in plasma undergoes proteolytic cleavage of its N-terminal hexapeptide to generate the mature form apolipoprotein C-II, which occurs as the minor form in plasma.

The protein resides in the secreted. In terms of biological role, component of chylomicrons, very low-density lipoproteins (VLDL), low-density lipoproteins (LDL), and high-density lipoproteins (HDL) in plasma. Plays an important role in lipoprotein metabolism as an activator of lipoprotein lipase. The sequence is that of Apolipoprotein C-II (APOC2) from Ellobius talpinus (Northern mole vole).